Here is a 244-residue protein sequence, read N- to C-terminus: T-cell immunoreceptor with Ig and ITIM domains (244 aa).

The N-terminal stretch at 1–21 (MRWCLLLIWAQGLRQAPLASG) is a signal peptide. An Ig-like V-type domain is found at 22–124 (MMTGTIETTG…DGTYTGRIFL (103 aa)). Residues 22–141 (MMTGTIETTG…AEHGARFQIP (120 aa)) lie on the Extracellular side of the membrane. Asn32 and Asn101 each carry an N-linked (GlcNAc...) asparagine glycan. Residues 32-42 (NISAEKGGSII) are homodimerization. A disulfide bridge links Cys45 with Cys108. Residues 142–162 (LLGAMAATLVVICTAVIVVVA) traverse the membrane as a helical segment. The Cytoplasmic portion of the chain corresponds to 163–244 (LTRKKKALRI…GNCSFFTETG (82 aa)). Tyr225 is subject to Phosphotyrosine. Positions 229 to 234 (LSYRSL) match the ITIM motif motif.

Homodimer in cis; binds with high affinity to PVR, forming a heterotetrameric assembly of two TIGIT and two PVR molecules. Binds with lower affinity to NECTIN2 and NECTIN3. Interacts with GRB2. Interacts with NECTIN4. In terms of tissue distribution, expressed at low levels on peripheral memory and regulatory CD4+ T-cells and NK cells and is up-regulated following activation of these cells (at protein level).

It localises to the cell membrane. Inhibitory receptor that plays a role in the modulation of immune responses. Suppresses T-cell activation by promoting the generation of mature immunoregulatory dendritic cells. Upon binding to its ligands PVR/CD155 or NECTIN2/CD112, which are expressed on antigen-presenting cells, sends inhibitory signals to the T-cell or NK cell. Mechanistically, interaction with ligand leads to phosphorylation of the cytoplasmic tail by Src family tyrosine kinases such as FYN or LCK, allowing subsequent binding to adapter GRB2 and SHIP1/INPP5D. In turn, inhibits PI3K and MAPK signaling cascades. In addition, associates with beta-arrestin-2/ARRB2 to recruit SHIP1/INPP5D that suppresses autoubiquitination of TRAF6 and subsequently inhibits NF-kappa-B signaling pathway. Also acts as a receptor for NECTIN4 to inhibit NK cell cytotoxicity. This is T-cell immunoreceptor with Ig and ITIM domains (TIGIT) from Homo sapiens (Human).